An 897-amino-acid polypeptide reads, in one-letter code: Schlafen family member 13 (897 aa).

The n'-domain region stretch occupies residues 2–355 (EANHCSLGVY…WVEKMMDADP (354 aa)). Catalysis depends on residues Glu208 and Glu213. His284, Cys286, and Cys321 together coordinate Zn(2+). 599–606 (GLPGSGKT) is an ATP binding site.

It belongs to the Schlafen family. Subgroup III subfamily. It depends on Mg(2+) as a cofactor.

Its subcellular location is the cytoplasm. In terms of biological role, endoribonuclease that cleaves tRNAs and rRNAs. Cleaves tRNAs 11 nucleotides from the 3'-terminus at the acceptor stem. Does not act on tRNA(Sec). Able to restrict HIV-1 virus replication; ability to inhibit HIV-1 replication is dependent on endoribonuclease activity. This is Schlafen family member 13 from Homo sapiens (Human).